Consider the following 131-residue polypeptide: Fumarate reductase subunit C (131 aa).

Transmembrane regions (helical) follow at residues 30-50, 63-83, and 109-129; these read EGTA…LFAL, FLQN…ALLH, and IIKS…FVAL.

This sequence belongs to the FrdC family. Part of an enzyme complex containing four subunits: a flavoprotein (FrdA), an iron-sulfur protein (FrdB), and two hydrophobic anchor proteins (FrdC and FrdD).

Its subcellular location is the cell inner membrane. Its function is as follows. Two distinct, membrane-bound, FAD-containing enzymes are responsible for the catalysis of fumarate and succinate interconversion; fumarate reductase is used in anaerobic growth, and succinate dehydrogenase is used in aerobic growth. Anchors the catalytic components of the fumarate reductase complex to the cell inner membrane, binds quinones. The polypeptide is Fumarate reductase subunit C (Shigella boydii serotype 4 (strain Sb227)).